A 105-amino-acid chain; its full sequence is Urease subunit beta (105 aa).

This sequence belongs to the urease beta subunit family. Heterotrimer of UreA (gamma), UreB (beta) and UreC (alpha) subunits. Three heterotrimers associate to form the active enzyme.

It is found in the cytoplasm. The catalysed reaction is urea + 2 H2O + H(+) = hydrogencarbonate + 2 NH4(+). It participates in nitrogen metabolism; urea degradation; CO(2) and NH(3) from urea (urease route): step 1/1. This is Urease subunit beta from Pseudomonas putida (strain W619).